The sequence spans 153 residues: Natriuretic peptides A (153 aa).

The first 25 residues, 1–25, serve as a signal peptide directing secretion; the sequence is MGSFSTITASFLLFLACQLLWQTGA. Propeptides lie at residues 26 to 123 and 93 to 103; these read NPVY…AAPR and DGGALGRGSWD. Residues 62–104 are disordered; that stretch reads VLSEQNEEAGAALSPLPEVPPWAGEVNPAQRDGGALGRGSWDS. A Phosphoserine modification is found at serine 129. A disulfide bridge links cysteine 130 with cysteine 146. An important for degradation of atrial natriuretic peptide by IDE region spans residues 147–151; that stretch reads NSFRY.

Belongs to the natriuretic peptide family. Homodimer; disulfide-linked antiparallel dimer. Post-translationally, the precursor molecule is proteolytically cleaved by CORIN at Arg-123 to produce the atrial natriuretic peptide. Undergoes further proteolytic cleavage by unknown proteases to give rise to long-acting natriuretic peptide, vessel dilator and kaliuretic peptide. Additional processing gives rise to the auriculin and atriopeptin peptides. In the kidneys, alternative processing by an unknown protease results in the peptide urodilatin. In terms of processing, cleavage by MME initiates degradation of the factor and thereby regulates its activity. Degradation by IDE results in reduced activation of NPR1 (in vitro). During IDE degradation, the resulting products can temporarily stimulate NPR2 to produce cGMP, before the fragments are completely degraded and inactivated by IDE (in vitro). Degraded by IDE. Post-translationally, phosphorylation on Ser-129 decreases vasorelaxant activity.

Its subcellular location is the secreted. The protein resides in the perikaryon. The protein localises to the cell projection. In terms of biological role, hormone that plays a key role in mediating cardio-renal homeostasis, and is involved in vascular remodeling and regulating energy metabolism. Acts by specifically binding and stimulating NPR1 to produce cGMP, which in turn activates effector proteins, such as PRKG1, that drive various biological responses. Regulates vasodilation, natriuresis, diuresis and aldosterone synthesis and is therefore essential for regulating blood pressure, controlling the extracellular fluid volume and maintaining the fluid-electrolyte balance. Also involved in inhibiting cardiac remodeling and cardiac hypertrophy by inducing cardiomyocyte apoptosis and attenuating the growth of cardiomyocytes and fibroblasts. Plays a role in female pregnancy by promoting trophoblast invasion and spiral artery remodeling in uterus, and thus prevents pregnancy-induced hypertension. In adipose tissue, acts in various cGMP- and PKG-dependent pathways to regulate lipid metabolism and energy homeostasis. This includes up-regulating lipid metabolism and mitochondrial oxygen utilization by activating the AMP-activated protein kinase (AMPK), and increasing energy expenditure by acting via MAPK11 to promote the UCP1-dependent thermogenesis of brown adipose tissue. Binds the clearance receptor NPR3 which removes the hormone from circulation. Its function is as follows. May have a role in cardio-renal homeostasis through regulation of natriuresis, diuresis, vasodilation, and inhibiting aldosterone synthesis. In vitro, promotes the production of cGMP and induces vasodilation. May promote natriuresis, at least in part, by enhancing prostaglandin E2 synthesis resulting in the inhibition of renal Na+-K+-ATPase. However reports on the involvement of this peptide in mammal blood volume and blood pressure homeostasis are conflicting; according to a report, in vivo it is not sufficient to activate cGMP and does not inhibit collecting duct transport nor effect diuresis and natriuresis. Appears to bind to specific receptors that are distinct from the receptors bound by atrial natriuretic peptide and vessel dilator. Possibly enhances protein excretion in urine by decreasing proximal tubular protein reabsorption. Functionally, may have a role in cardio-renal homeostasis through regulation of natriuresis, diuresis, and vasodilation. In vitro, promotes the production of cGMP and induces vasodilation. May promote natriuresis, at least in part, by enhancing prostaglandin E2 synthesis resulting in the inhibition of renal Na+-K+-ATPase. However reports on the involvement of this peptide in mammal blood volume and blood pressure homeostasis are conflicting; according to a report it is not sufficient to activate cGMP and does not inhibit collecting duct transport nor effect diuresis and natriuresis. Appears to bind to specific receptors that are distinct from the receptors bound by the atrial natriuretic and long-acting natriuretic peptides. Possibly functions in protein excretion in urine by maintaining the integrity of the proximal tubules and enhancing protein excretion by decreasing proximal tubular protein reabsorption. May have a role in cardio-renal homeostasis through regulation of diuresis and inhibiting aldosterone synthesis. In vitro, promotes the production of cGMP and induces vasodilation. May promote natriuresis, at least in part, by enhancing prostaglandin E2 synthesis resulting in the inhibition of renal Na+-K+-ATPase. May have a role in potassium excretion but not sodium excretion (natriuresis). Possibly enhances protein excretion in urine by decreasing proximal tubular protein reabsorption. In terms of biological role, hormone produced in the kidneys that appears to be important for maintaining cardio-renal homeostasis. Mediates vasodilation, natriuresis and diuresis primarily in the renal system, in order to maintain the extracellular fluid volume and control the fluid-electrolyte balance. Specifically binds and stimulates cGMP production by renal transmembrane receptors, likely NPR1. Urodilatin not ANP, may be the natriuretic peptide responsible for the regulation of sodium and water homeostasis in the kidney. Its function is as follows. May have a role in cardio-renal homeostasis through regulation of natriuresis and vasodilation. In vivo promotes natriuresis and in vitro, vasodilates renal artery strips. Functionally, may have a role in cardio-renal homeostasis through regulation of regulation of natriuresis and vasodilation. In vivo promotes natriuresis. In vitro, vasodilates intestinal smooth muscle but not smooth muscle strips. May have a role in cardio-renal homeostasis through regulation of natriuresis and vasodilation. In vivo promotes natriuresis. In vitro, selectively vasodilates intestinal and vascular smooth muscle strips. In terms of biological role, may have a role in cardio-renal homeostasis through regulation of natriuresis and vasodilation. In vivo promotes natriuresis. In vitro, selectively vasodilates intestinal smooth muscle but not vascular smooth muscle strips. The polypeptide is Natriuretic peptides A (NPPA) (Felis catus (Cat)).